Here is a 340-residue protein sequence, read N- to C-terminus: MPHGRVVNTPVTIAIDAMSGDRGAAVVVHAALEAVRENEALSLVLVGIRSELEALLHEGHARIRIVEAADVVRMNERPSHALRHKKNSSMAIALSLVRDGEAQGCVSAGNTGALMAFGRSIIRMYPGIERPAIAKLIPSLRGRCHVLDLGANVDSTAENLYQYALMGSLMASAICRQSEPRVALLNVGEEEIKGNEQVRLASHMLAQCDTINYIGYVEGSDLFRDVADVVVCDGFVGNIALKTGEGVAGLLIELLEQAFTRSMYGRFVGLLARPIIGRLLQLMDPSRHNGASLLGLQGVVIKSHGNANERAMLAAIRQAVREVQLEVPRRINERLDDLML.

The protein belongs to the PlsX family. Homodimer. Probably interacts with PlsY.

It localises to the cytoplasm. It carries out the reaction a fatty acyl-[ACP] + phosphate = an acyl phosphate + holo-[ACP]. The protein operates within lipid metabolism; phospholipid metabolism. Catalyzes the reversible formation of acyl-phosphate (acyl-PO(4)) from acyl-[acyl-carrier-protein] (acyl-ACP). This enzyme utilizes acyl-ACP as fatty acyl donor, but not acyl-CoA. In Marinobacter nauticus (strain ATCC 700491 / DSM 11845 / VT8) (Marinobacter aquaeolei), this protein is Phosphate acyltransferase.